The primary structure comprises 160 residues: MSILKKPDLSDAQLRAKLAKGMGHNMYGEPAWPNDLLYTFPVVILGTITCCIGLALMEPSAIGEAANPFATPLEILPEWYFYPTFNLLRVIPNKLLGVLSMASVPLGLIFVPFIENRNRYQNPWRRPIATTVFLVGTVVTIWLGIGATKSIQDAISLGLF.

A run of 3 helical transmembrane segments spans residues 36-56, 95-115, and 127-147; these read LLYT…GLAL, LLGV…PFIE, and PIAT…GIGA.

It belongs to the cytochrome b family. PetD subfamily. In terms of assembly, the 4 large subunits of the cytochrome b6-f complex are cytochrome b6, subunit IV (17 kDa polypeptide, petD), cytochrome f and the Rieske protein, while the 4 small subunits are petG, petL, petM and petN. The complex functions as a dimer.

It is found in the plastid. The protein resides in the chloroplast thylakoid membrane. In terms of biological role, component of the cytochrome b6-f complex, which mediates electron transfer between photosystem II (PSII) and photosystem I (PSI), cyclic electron flow around PSI, and state transitions. This is Cytochrome b6-f complex subunit 4 from Cyanidioschyzon merolae (strain NIES-3377 / 10D) (Unicellular red alga).